The following is a 467-amino-acid chain: ATP-dependent protease ATPase subunit HslU (467 aa).

ATP is bound by residues V22 and 64-69; that span reads GVGKTE. Residues 149–192 are disordered; sequence QTNNPLESLFGGAIPNFGQNNEDEEEPPTEEIKTKRSEIKRQLE. Positions 178 to 192 are enriched in basic and acidic residues; sequence EEIKTKRSEIKRQLE. 3 residues coordinate ATP: D280, E345, and R417.

Belongs to the ClpX chaperone family. HslU subfamily. A double ring-shaped homohexamer of HslV is capped on each side by a ring-shaped HslU homohexamer. The assembly of the HslU/HslV complex is dependent on binding of ATP.

It localises to the cytoplasm. ATPase subunit of a proteasome-like degradation complex; this subunit has chaperone activity. The binding of ATP and its subsequent hydrolysis by HslU are essential for unfolding of protein substrates subsequently hydrolyzed by HslV. HslU recognizes the N-terminal part of its protein substrates and unfolds these before they are guided to HslV for hydrolysis. The protein is ATP-dependent protease ATPase subunit HslU of Staphylococcus aureus (strain MRSA252).